Consider the following 594-residue polypeptide: UvrABC system protein C (594 aa).

The GIY-YIG domain maps to 13-99; sequence NSSGVYQYFD…IKQLKPKYNI (87 aa). Residues 205 to 240 enclose the UVR domain; sequence DRLIKELELKMERLSNNLRFEEALIYRDRIAKIQKI.

This sequence belongs to the UvrC family. Interacts with UvrB in an incision complex.

The protein resides in the cytoplasm. Its function is as follows. The UvrABC repair system catalyzes the recognition and processing of DNA lesions. UvrC both incises the 5' and 3' sides of the lesion. The N-terminal half is responsible for the 3' incision and the C-terminal half is responsible for the 5' incision. In Helicobacter pylori (strain ATCC 700392 / 26695) (Campylobacter pylori), this protein is UvrABC system protein C.